A 357-amino-acid polypeptide reads, in one-letter code: Isopentenyl-diphosphate delta-isomerase (357 aa).

Substrate is bound at residue 12-13 (RK). FMN contacts are provided by residues Ser-70, 71–73 (SMT), Ser-101, and Asn-130. 101 to 103 (SMR) serves as a coordination point for substrate. Position 165 (Gln-165) interacts with substrate. Position 166 (Glu-166) interacts with Mg(2+). FMN contacts are provided by residues Lys-197, 289-291 (GIR), and 310-311 (AQ).

Belongs to the IPP isomerase type 2 family. Homooctamer. Dimer of tetramers. The cofactor is FMN. It depends on NADPH as a cofactor. Mg(2+) is required as a cofactor.

The protein resides in the cytoplasm. The catalysed reaction is isopentenyl diphosphate = dimethylallyl diphosphate. Involved in the biosynthesis of isoprenoids. Catalyzes the 1,3-allylic rearrangement of the homoallylic substrate isopentenyl (IPP) to its allylic isomer, dimethylallyl diphosphate (DMAPP). The polypeptide is Isopentenyl-diphosphate delta-isomerase (Chlorobaculum parvum (strain DSM 263 / NCIMB 8327) (Chlorobium vibrioforme subsp. thiosulfatophilum)).